We begin with the raw amino-acid sequence, 367 residues long: NADH-quinone oxidoreductase subunit H (367 aa).

8 helical membrane-spanning segments follow: residues A19–V39, I87–I107, I132–G152, I178–V198, M204–L224, I266–I286, I291–W311, and G328–V348.

The protein belongs to the complex I subunit 1 family. NDH-1 is composed of 14 different subunits. Subunits NuoA, H, J, K, L, M, N constitute the membrane sector of the complex.

The protein resides in the cell inner membrane. The catalysed reaction is a quinone + NADH + 5 H(+)(in) = a quinol + NAD(+) + 4 H(+)(out). NDH-1 shuttles electrons from NADH, via FMN and iron-sulfur (Fe-S) centers, to quinones in the respiratory chain. The immediate electron acceptor for the enzyme in this species is believed to be ubiquinone. Couples the redox reaction to proton translocation (for every two electrons transferred, four hydrogen ions are translocated across the cytoplasmic membrane), and thus conserves the redox energy in a proton gradient. This subunit may bind ubiquinone. This chain is NADH-quinone oxidoreductase subunit H, found in Ehrlichia chaffeensis (strain ATCC CRL-10679 / Arkansas).